Reading from the N-terminus, the 197-residue chain is Rac-like GTP-binding protein RHO1 (197 aa).

13-20 is a GTP binding site; that stretch reads GDGAVGKT. The short motif at 35–43 is the Effector region element; that stretch reads YVPTVFDNF. Residues 60–64 and 118–121 contribute to the GTP site; these read DTAGQ and TKLD. A Cysteine methyl ester modification is found at Cys-194. The S-geranylgeranyl cysteine moiety is linked to residue Cys-194. A propeptide spans 195 to 197 (removed in mature form); that stretch reads SIL.

The protein belongs to the small GTPase superfamily. Rho family.

It localises to the cytoplasm. The protein resides in the membrane. In terms of biological role, inactive GDP-bound Rho GTPases reside in the cytosol, are found in a complex with Rho GDP-dissociation inhibitors (Rho GDIs), and are released from the GDI protein in order to translocate to membranes upon activation. The polypeptide is Rac-like GTP-binding protein RHO1 (RHO1) (Beta vulgaris (Sugar beet)).